The chain runs to 346 residues: Methionine import ATP-binding protein MetN 1 (346 aa).

Residues Ile-2–Val-241 form the ABC transporter domain. Gly-38 to Ser-45 serves as a coordination point for ATP.

Belongs to the ABC transporter superfamily. Methionine importer (TC 3.A.1.24) family. The complex is composed of two ATP-binding proteins (MetN), two transmembrane proteins (MetI) and a solute-binding protein (MetQ).

The protein localises to the cell membrane. It catalyses the reaction L-methionine(out) + ATP + H2O = L-methionine(in) + ADP + phosphate + H(+). It carries out the reaction D-methionine(out) + ATP + H2O = D-methionine(in) + ADP + phosphate + H(+). Part of the ABC transporter complex MetNIQ involved in methionine import. Responsible for energy coupling to the transport system. The chain is Methionine import ATP-binding protein MetN 1 from Bacillus cereus (strain ZK / E33L).